Consider the following 263-residue polypeptide: Proteasome subunit alpha type-1 (263 aa).

M1 is subject to N-acetylmethionine. S110 carries the post-translational modification Phosphoserine; alternate. Residue S110 is glycosylated (O-linked (GlcNAc) serine; alternate). K115 participates in a covalent cross-link: Glycyl lysine isopeptide (Lys-Gly) (interchain with G-Cter in ubiquitin). S177 bears the Phosphoserine mark. K208 is covalently cross-linked (Glycyl lysine isopeptide (Lys-Gly) (interchain with G-Cter in ubiquitin)). Residues 232-263 (FLEGLEERPQRKAQPAQPADEPAEKADEPMEH) form a disordered region. A compositionally biased stretch (basic and acidic residues) spans 253-263 (PAEKADEPMEH).

This sequence belongs to the peptidase T1A family. As to quaternary structure, the 26S proteasome consists of a 20S proteasome core and two 19S regulatory subunits. The 20S proteasome core is a barrel-shaped complex made of 28 subunits that are arranged in four stacked rings. The two outer rings are each formed by seven alpha subunits, and the two inner rings are formed by seven beta subunits. The proteolytic activity is exerted by three beta-subunits PSMB5, PSMB6 and PSMB7. Interacts with NOTCH3. Interacts with ZFAND1.

The protein localises to the cytoplasm. It is found in the nucleus. In terms of biological role, component of the 20S core proteasome complex involved in the proteolytic degradation of most intracellular proteins. This complex plays numerous essential roles within the cell by associating with different regulatory particles. Associated with two 19S regulatory particles, forms the 26S proteasome and thus participates in the ATP-dependent degradation of ubiquitinated proteins. The 26S proteasome plays a key role in the maintenance of protein homeostasis by removing misfolded or damaged proteins that could impair cellular functions, and by removing proteins whose functions are no longer required. Associated with the PA200 or PA28, the 20S proteasome mediates ubiquitin-independent protein degradation. This type of proteolysis is required in several pathways including spermatogenesis (20S-PA200 complex) or generation of a subset of MHC class I-presented antigenic peptides (20S-PA28 complex). This is Proteasome subunit alpha type-1 from Homo sapiens (Human).